Here is a 117-residue protein sequence, read N- to C-terminus: Fluoride-specific ion channel FluC 2 (117 aa).

The next 2 membrane-spanning stretches (helical) occupy residues 1-21 and 46-66; these read MISI…RSAI and FLIG…AFFV. 2 residues coordinate Na(+): glycine 71 and threonine 74. A helical membrane pass occupies residues 95–115; the sequence is LFLNYSLLQFIIGFIACYIGY.

The protein belongs to the fluoride channel Fluc/FEX (TC 1.A.43) family.

Its subcellular location is the cell membrane. The enzyme catalyses fluoride(in) = fluoride(out). Na(+) is not transported, but it plays an essential structural role and its presence is essential for fluoride channel function. In terms of biological role, fluoride-specific ion channel. Important for reducing fluoride concentration in the cell, thus reducing its toxicity. This chain is Fluoride-specific ion channel FluC 2, found in Staphylococcus aureus (strain Mu50 / ATCC 700699).